The chain runs to 147 residues: Methylglyoxal synthase (147 aa).

One can recognise an MGS-like domain in the interval Val4 to Ser147. Substrate-binding positions include His17, Lys21, Thr43–Thr46, and Ser63–Gly64. The Proton donor/acceptor role is filled by Asp69. Position 96 (His96) interacts with substrate.

Belongs to the methylglyoxal synthase family.

It catalyses the reaction dihydroxyacetone phosphate = methylglyoxal + phosphate. Its function is as follows. Catalyzes the formation of methylglyoxal from dihydroxyacetone phosphate. The protein is Methylglyoxal synthase of Leptospira borgpetersenii serovar Hardjo-bovis (strain JB197).